A 392-amino-acid chain; its full sequence is Histidinol-phosphate aminotransferase (392 aa).

Residues 1 to 24 (MSAVLKDPIPAPGRPESTRPEPRP) are disordered. Lys236 carries the post-translational modification N6-(pyridoxal phosphate)lysine.

It belongs to the class-II pyridoxal-phosphate-dependent aminotransferase family. Histidinol-phosphate aminotransferase subfamily. Homodimer. It depends on pyridoxal 5'-phosphate as a cofactor.

It catalyses the reaction L-histidinol phosphate + 2-oxoglutarate = 3-(imidazol-4-yl)-2-oxopropyl phosphate + L-glutamate. The protein operates within amino-acid biosynthesis; L-histidine biosynthesis; L-histidine from 5-phospho-alpha-D-ribose 1-diphosphate: step 7/9. This chain is Histidinol-phosphate aminotransferase, found in Xanthobacter autotrophicus (strain ATCC BAA-1158 / Py2).